Consider the following 105-residue polypeptide: Transmembrane protein 273 (105 aa).

An N-terminal signal peptide occupies residues Met1–Ala19. Over Gln20–Leu38 the chain is Extracellular. A helical membrane pass occupies residues Ile39–Ile59. Residues Arg60 to Leu105 are Cytoplasmic-facing.

The protein resides in the membrane. The sequence is that of Transmembrane protein 273 from Homo sapiens (Human).